Consider the following 330-residue polypeptide: ADP-L-glycero-D-manno-heptose-6-epimerase (330 aa).

Residues 11 to 12 (FI), 32 to 33 (DN), lysine 39, lysine 54, 75 to 79 (EGACS), and asparagine 92 contribute to the NADP(+) site. The active-site Proton acceptor is the tyrosine 139. NADP(+) is bound at residue lysine 143. Substrate is bound at residue asparagine 168. NADP(+) is bound by residues valine 169 and lysine 177. Lysine 177 serves as the catalytic Proton acceptor. Substrate contacts are provided by residues arginine 179, histidine 186, 200 to 203 (FGEY), arginine 213, and tyrosine 292.

It belongs to the NAD(P)-dependent epimerase/dehydratase family. HldD subfamily. As to quaternary structure, homopentamer. NADP(+) serves as cofactor.

It catalyses the reaction ADP-D-glycero-beta-D-manno-heptose = ADP-L-glycero-beta-D-manno-heptose. It functions in the pathway nucleotide-sugar biosynthesis; ADP-L-glycero-beta-D-manno-heptose biosynthesis; ADP-L-glycero-beta-D-manno-heptose from D-glycero-beta-D-manno-heptose 7-phosphate: step 4/4. In terms of biological role, catalyzes the interconversion between ADP-D-glycero-beta-D-manno-heptose and ADP-L-glycero-beta-D-manno-heptose via an epimerization at carbon 6 of the heptose. In Paraburkholderia xenovorans (strain LB400), this protein is ADP-L-glycero-D-manno-heptose-6-epimerase.